A 626-amino-acid chain; its full sequence is Chaperone protein HtpG (626 aa).

The tract at residues 1 to 331 (MSETVERHEF…TDDLPLNVSR (331 aa)) is a; substrate-binding. The b stretch occupies residues 332-544 (EMLQSTPTLQ…GMGPDLQMQR (213 aa)). The c stretch occupies residues 545–626 (LLRRAGRGFG…GTAAKPAGSA (82 aa)).

It belongs to the heat shock protein 90 family. Homodimer.

It is found in the cytoplasm. Its function is as follows. Molecular chaperone. Has ATPase activity. The chain is Chaperone protein HtpG from Methylorubrum extorquens (strain CM4 / NCIMB 13688) (Methylobacterium extorquens).